Reading from the N-terminus, the 798-residue chain is Integrin beta-7 (798 aa).

Residues 1 to 19 (MVALPMVLVLLLVLSRGES) form the signal peptide. The Extracellular segment spans residues 20–723 (ELDAKIPSTG…VRPQEKGADH (704 aa)). One can recognise a PSI domain in the interval 44 to 92 (SCQPAPSCQKCILSHPSCAWCKQLNFTASGEAEARRCARREELLARGCP). 7 disulfides stabilise this stretch: Cys-51/Cys-476, Cys-54/Cys-80, Cys-64/Cys-91, Cys-216/Cys-223, Cys-271/Cys-311, Cys-412/Cys-428, and Cys-448/Cys-474. N-linked (GlcNAc...) asparagine glycosylation is present at Asn-68. Residues 98-124 (EPRGQQEVLQDQPLSQGARGEGATQLA) are disordered. The 240-residue stretch at 150–389 (YPVDLYYLMD…QLIMDAYNSL (240 aa)) folds into the VWFA domain. 2 residues coordinate Mg(2+): Ser-161 and Ser-163. Ca(2+)-binding residues include Ser-163, Asp-166, Asp-167, and Asp-198. Ca(2+)-binding residues include Asn-254, Asp-256, Pro-258, and Glu-259. Glu-259 contributes to the Mg(2+) binding site. Asn-279 carries N-linked (GlcNAc...) asparagine glycosylation. 2 residues coordinate Ca(2+): Asp-289 and Glu-373. N-linked (GlcNAc...) asparagine glycosylation occurs at Asn-434. The N-linked (GlcNAc...) asparagine glycan is linked to Asn-477. Intrachain disulfides connect Cys-478-Cys-497, Cys-488-Cys-500, Cys-502-Cys-511, Cys-513-Cys-545, Cys-527-Cys-543, Cys-537-Cys-548, Cys-550-Cys-559, Cys-561-Cys-582, Cys-566-Cys-580, Cys-574-Cys-585, Cys-587-Cys-596, Cys-598-Cys-621, Cys-605-Cys-619, Cys-613-Cys-624, Cys-626-Cys-635, Cys-638-Cys-641, Cys-645-Cys-688, Cys-651-Cys-670, and Cys-654-Cys-666. I-EGF domains follow at residues 478 to 512 (CSDT…RLCE), 513 to 560 (CSVA…HLCE), 561 to 597 (CDDA…RACE), and 598 to 636 (CSGD…ALCD). Asn-531 carries an N-linked (GlcNAc...) asparagine glycan. A glycan (N-linked (GlcNAc...) asparagine) is linked at Asn-590. Residues Asn-665 and Asn-674 are each glycosylated (N-linked (GlcNAc...) asparagine). Residues 724–746 (TQAIVLGCVGGIVAVGLGLVLAY) traverse the membrane as a helical segment. The Cytoplasmic portion of the chain corresponds to 747–798 (RLSVEIYDRREYSRFEKEQQQLNWKQDSNPLYKSAITTTINPRFQEADSPTL). Residue Tyr-778 is modified to Phosphotyrosine; by Tyr-kinases.

This sequence belongs to the integrin beta chain family. In terms of assembly, heterodimer of an alpha and a beta subunit. ITGB7/beta-7 associates with either ITGA4/alpha-4 or ITGAE/alpha-E. Integrin ITGA4/ITGB7 interacts with MADCAM1. Integrin ITGA4/ITGB7 interacts with VCAM1 and fibronectin. Interacts with FLNA (via filamin repeats 4, 9, 12, 17, 19, 21, and 23). As to quaternary structure, (Microbial infection) May interact with HIV-1 gp120. In terms of tissue distribution, expressed in a variety of leukocyte lines.

Its subcellular location is the cell membrane. Its function is as follows. Integrin ITGA4/ITGB7 (alpha-4/beta-7) (Peyer patches-specific homing receptor LPAM-1) is an adhesion molecule that mediates lymphocyte migration and homing to gut-associated lymphoid tissue (GALT). Integrin ITGA4/ITGB7 interacts with the cell surface adhesion molecules MADCAM1 which is normally expressed by the vascular endothelium of the gastrointestinal tract. Also interacts with VCAM1 and fibronectin, an extracellular matrix component. It recognizes one or more domains within the alternatively spliced CS-1 region of fibronectin. Interactions involve the tripeptide L-D-T in MADCAM1, and L-D-V in fibronectin. Integrin ITGAE/ITGB7 (alpha-E/beta-7, HML-1) is a receptor for E-cadherin. In terms of biological role, (Microbial infection) Binds to HIV-1 gp120, thereby allowing the virus to enter GALT, which is thought to be the major trigger of AIDS disease. Interaction would involve a tripeptide L-D-I in HIV-1 gp120. This Homo sapiens (Human) protein is Integrin beta-7 (ITGB7).